The chain runs to 188 residues: Phosphatidylinositol N-acetylglucosaminyltransferase subunit H (188 aa).

This sequence belongs to the PIGH family. In terms of assembly, component of the glycosylphosphatidylinositol-N-acetylglucosaminyltransferase (GPI-GnT) complex composed at least by PIGA, PIGC, PIGH, PIGP, PIGQ, PIGY and DPM2. Interacts with PIGQ.

It localises to the cytoplasm. Its pathway is glycolipid biosynthesis; glycosylphosphatidylinositol-anchor biosynthesis. Part of the glycosylphosphatidylinositol-N-acetylglucosaminyltransferase (GPI-GnT) complex that catalyzes the transfer of N-acetylglucosamine from UDP-N-acetylglucosamine to phosphatidylinositol and participates in the first step of GPI biosynthesis. This is Phosphatidylinositol N-acetylglucosaminyltransferase subunit H from Mus musculus (Mouse).